A 324-amino-acid chain; its full sequence is Gamma-soluble NSF attachment protein (324 aa).

The span at 285-298 (NPTINSTAPQQQYS) shows a compositional bias: polar residues. Residues 285-324 (NPTINSTAPQQQYSNTTTTTTNNTNNNNPTSQQDDDEDVL) form a disordered region. Low complexity predominate over residues 299–312 (NTTTTTTNNTNNNN).

It belongs to the SNAP family. Interacts with nsfA and probably SNARE proteins.

The protein localises to the cytoplasmic vesicle membrane. In terms of biological role, may be required for vesicular transport between the endoplasmic reticulum and the Golgi apparatus. Involved in vesicle fusion with nsfA and probably SNARE proteins. The chain is Gamma-soluble NSF attachment protein (snpC) from Dictyostelium discoideum (Social amoeba).